A 400-amino-acid polypeptide reads, in one-letter code: Dual specificity mitogen-activated protein kinase kinase 2 (400 aa).

Position 1 is an N-acetylmethionine (methionine 1). The residue at position 23 (serine 23) is a Phosphoserine. One can recognise a Protein kinase domain in the interval 72–369; that stretch reads FERISELGAG…LKMLMSHTFI (298 aa). Residues 78-86 and lysine 101 each bind ATP; that span reads LGAGNGGVV. Aspartate 194 serves as the catalytic Proton acceptor. Phosphoserine; by RAF is present on serine 222. Phosphoserine is present on residues serine 226, serine 293, serine 295, and serine 306. The tract at residues 288-309 is disordered; that stretch reads EGEPHSISPRPRPPGRPISGHG. Residues threonine 394 and threonine 396 each carry the phosphothreonine modification.

It belongs to the protein kinase superfamily. STE Ser/Thr protein kinase family. MAP kinase kinase subfamily. Interacts with MORG1. Interacts with SGK1. Interacts with KSR1. Interacts with KSR1 and BRAF; the interaction with KSR1 mediates KSR1-BRAF dimerization. Interacts with GLS. Requires Mg(2+) as cofactor. MAPKK is itself dependent on Ser/Thr phosphorylation for activity catalyzed by MAP kinase kinase kinases (RAF or MEKK1).

It is found in the cytoplasm. It localises to the membrane. It catalyses the reaction L-seryl-[protein] + ATP = O-phospho-L-seryl-[protein] + ADP + H(+). The enzyme catalyses L-threonyl-[protein] + ATP = O-phospho-L-threonyl-[protein] + ADP + H(+). It carries out the reaction L-tyrosyl-[protein] + ATP = O-phospho-L-tyrosyl-[protein] + ADP + H(+). Its function is as follows. Catalyzes the concomitant phosphorylation of a threonine and a tyrosine residue in a Thr-Glu-Tyr sequence located in MAP kinases. Activates the ERK1 and ERK2 MAP kinases. Activates BRAF in a KSR1 or KSR2-dependent manner; by binding to KSR1 or KSR2 releases the inhibitory intramolecular interaction between KSR1 or KSR2 protein kinase and N-terminal domains which promotes KSR1 or KSR2-BRAF dimerization and BRAF activation. The polypeptide is Dual specificity mitogen-activated protein kinase kinase 2 (MAP2K2) (Canis lupus familiaris (Dog)).